A 109-amino-acid chain; its full sequence is Large ribosomal subunit protein uL18c (109 aa).

Belongs to the universal ribosomal protein uL18 family. Part of the 50S ribosomal subunit; contacts the 5S rRNA.

It is found in the plastid. The protein resides in the chloroplast. Functionally, binds 5S rRNA, forms part of the central protuberance of the 50S subunit. This chain is Large ribosomal subunit protein uL18c (rpl18), found in Cyanidioschyzon merolae (strain NIES-3377 / 10D) (Unicellular red alga).